The chain runs to 186 residues: Casparian strip membrane protein 5 (186 aa).

At 1–23 (MEHGEISSKAPLVAPVAAGVNRA) the chain is on the cytoplasmic side. Residues 24–44 (VAVVDTFLRFIAIIGTIGSAI) traverse the membrane as a helical segment. The Extracellular segment spans residues 45–73 (AMGTTNETLPFFTQFIQFEAKYSDLPSFT). N50 carries N-linked (GlcNAc...) asparagine glycosylation. The chain crosses the membrane as a helical span at residues 74-94 (FFVAANAVVCTYLVLSIPLSI). Over 95-106 (VHILRPRARYSR) the chain is Cytoplasmic. The helical transmembrane segment at 107-127 (LFLVFFDTAMLALLTAGASAA) threads the bilayer. Over 128–160 (AAIVYLAHKGNVRANWFSICQQFDSFCERISGS) the chain is Extracellular. A helical transmembrane segment spans residues 161-181 (LIGSFAAMVLLVVLITLSAFA). The Cytoplasmic portion of the chain corresponds to 182-186 (LARRH).

This sequence belongs to the Casparian strip membrane proteins (CASP) family. Homodimer and heterodimers.

The protein resides in the cell membrane. In terms of biological role, regulates membrane-cell wall junctions and localized cell wall deposition. Required for establishment of the Casparian strip membrane domain (CSD) and the subsequent formation of Casparian strips, a cell wall modification of the root endodermis that determines an apoplastic barrier between the intraorganismal apoplasm and the extraorganismal apoplasm and prevents lateral diffusion. This Oryza sativa subsp. japonica (Rice) protein is Casparian strip membrane protein 5.